Here is a 285-residue protein sequence, read N- to C-terminus: UPF0354 protein SH1179 (285 aa).

This sequence belongs to the UPF0354 family.

The sequence is that of UPF0354 protein SH1179 from Staphylococcus haemolyticus (strain JCSC1435).